Reading from the N-terminus, the 446-residue chain is UDP-N-acetylmuramoylalanine--D-glutamate ligase (446 aa).

115 to 121 is a binding site for ATP; that stretch reads GTNGKTT.

The protein belongs to the MurCDEF family.

It localises to the cytoplasm. The enzyme catalyses UDP-N-acetyl-alpha-D-muramoyl-L-alanine + D-glutamate + ATP = UDP-N-acetyl-alpha-D-muramoyl-L-alanyl-D-glutamate + ADP + phosphate + H(+). The protein operates within cell wall biogenesis; peptidoglycan biosynthesis. In terms of biological role, cell wall formation. Catalyzes the addition of glutamate to the nucleotide precursor UDP-N-acetylmuramoyl-L-alanine (UMA). In Pelobacter propionicus (strain DSM 2379 / NBRC 103807 / OttBd1), this protein is UDP-N-acetylmuramoylalanine--D-glutamate ligase.